A 392-amino-acid polypeptide reads, in one-letter code: Outer membrane protein assembly factor BamB (392 aa).

The first 19 residues, 1–19 (MQLRKLLLPGLLSVTLLSG), serve as a signal peptide directing secretion. The N-palmitoyl cysteine moiety is linked to residue cysteine 20. Residue cysteine 20 is the site of S-diacylglycerol cysteine attachment.

This sequence belongs to the BamB family. As to quaternary structure, part of the Bam complex, which is composed of the outer membrane protein BamA, and four lipoproteins BamB, BamC, BamD and BamE.

It is found in the cell outer membrane. In terms of biological role, part of the outer membrane protein assembly complex, which is involved in assembly and insertion of beta-barrel proteins into the outer membrane. The chain is Outer membrane protein assembly factor BamB from Shigella dysenteriae serotype 1 (strain Sd197).